The chain runs to 188 residues: Cytidylate kinase (188 aa).

Glycine 7–threonine 15 contacts ATP.

Belongs to the cytidylate kinase family. Type 2 subfamily.

The protein resides in the cytoplasm. It carries out the reaction CMP + ATP = CDP + ADP. It catalyses the reaction dCMP + ATP = dCDP + ADP. The polypeptide is Cytidylate kinase (cmk) (Thermoplasma acidophilum (strain ATCC 25905 / DSM 1728 / JCM 9062 / NBRC 15155 / AMRC-C165)).